Here is a 601-residue protein sequence, read N- to C-terminus: Potassium channel KAT2 (601 aa).

Topologically, residues 1–42 (METISNIFHNDPLPPLGARANQSIKLRKFIISPYDSRYRTWE) are cytoplasmic. The chain crosses the membrane as a helical span at residues 43 to 63 (TFLLVLVVYSAWICPFELAYL). At 64–71 (RNLSWKVS) the chain is on the extracellular side. Residues 72–92 (LVDNIIDSFFAIDIILTFFLA) form a helical membrane-spanning segment. Over 93 to 112 (YLDQKSYLLVDDPKRIVARY) the chain is Cytoplasmic. The chain crosses the membrane as a helical span at residues 113–133 (FSSWFLFDVCSTIPYQLLGQI). At 134–144 (FKKHENGLAYR) the chain is on the extracellular side. Residues 145 to 165 (LLSMLRLWRLRRLSELFARLE) traverse the membrane as a helical; Voltage-sensor segment. Over 166–179 (KDIRLNYYWIRCTK) the chain is Cytoplasmic. The chain crosses the membrane as a helical span at residues 180–200 (LISVTLFAVHCSGCFNYLIAD). Residues 201-227 (RYPNPARTWIGAAIPNYRSQNLWVRYV) lie on the Extracellular side of the membrane. The pore-forming intramembrane region spans 228–247 (TAIYWSITTLTTTGYGDLHA). At 248 to 251 (ENQR) the chain is on the extracellular side. A helical transmembrane segment spans residues 252–272 (EMLFSICYMLFNLGLTAYLIG). Over 273 to 601 (NMTNLVVQGS…DGDHLFFMEI (329 aa)) the chain is Cytoplasmic. Residue 356–475 (LFHGVSFTCM…RVILNNLSQK (120 aa)) participates in a nucleoside 3',5'-cyclic phosphate binding. The KHA domain maps to 530–601 (RVTIHMYSQR…DGDHLFFMEI (72 aa)).

Belongs to the potassium channel family. Plant (TC 1.A.1.4) subfamily.

It is found in the membrane. In terms of biological role, probable inward-rectifying potassium channel. Assuming opened or closed conformations in response to the voltage difference across the membrane, the channel is activated by hyperpolarization. The protein is Potassium channel KAT2 of Oryza sativa subsp. japonica (Rice).